A 396-amino-acid polypeptide reads, in one-letter code: 1-deoxy-D-xylulose 5-phosphate reductoisomerase (396 aa).

6 residues coordinate NADPH: Thr15, Gly16, Ser17, Ile18, Gly41, and Asn129. Lys130 lines the 1-deoxy-D-xylulose 5-phosphate pocket. Residue Glu131 participates in NADPH binding. Asp155 lines the Mn(2+) pocket. Positions 156, 157, 182, and 205 each coordinate 1-deoxy-D-xylulose 5-phosphate. Glu157 contacts Mn(2+). Gly211 contributes to the NADPH binding site. Residues Ser218, Asn223, Lys224, and Glu227 each contribute to the 1-deoxy-D-xylulose 5-phosphate site. Glu227 contributes to the Mn(2+) binding site.

The protein belongs to the DXR family. Requires Mg(2+) as cofactor. Mn(2+) serves as cofactor.

The enzyme catalyses 2-C-methyl-D-erythritol 4-phosphate + NADP(+) = 1-deoxy-D-xylulose 5-phosphate + NADPH + H(+). The protein operates within isoprenoid biosynthesis; isopentenyl diphosphate biosynthesis via DXP pathway; isopentenyl diphosphate from 1-deoxy-D-xylulose 5-phosphate: step 1/6. Its function is as follows. Catalyzes the NADPH-dependent rearrangement and reduction of 1-deoxy-D-xylulose-5-phosphate (DXP) to 2-C-methyl-D-erythritol 4-phosphate (MEP). The sequence is that of 1-deoxy-D-xylulose 5-phosphate reductoisomerase from Xanthomonas oryzae pv. oryzae (strain MAFF 311018).